Consider the following 441-residue polypeptide: ATP-dependent RNA helicase SUB2-1 (441 aa).

The segment covering 1-19 has biased composition (acidic residues); the sequence is MSHEGEEDLLEYSDNEQDI. The disordered stretch occupies residues 1–46; that stretch reads MSHEGEEDLLEYSDNEQDIQVDASKAAEPSELDATTAEDASNGDAE. Residues 57–85 carry the Q motif motif; the sequence is TGFKDFLLKPELARAIIDCGFEHPSEVQQ. The region spanning 88-263 is the Helicase ATP-binding domain; it reads IPQSIHGTDV…RRFLQNPLEI (176 aa). Residue 101 to 108 participates in ATP binding; that stretch reads AKSGLGKT. The DECD box motif lies at 210–213; sequence DECD. One can recognise a Helicase C-terminal domain in the interval 291 to 436; that stretch reads KLAQLLDDLE…EFPEEGIDPS (146 aa).

It belongs to the DEAD box helicase family. DECD subfamily.

The protein localises to the nucleus. It catalyses the reaction ATP + H2O = ADP + phosphate + H(+). Its function is as follows. ATP-binding RNA helicase involved in transcription elongation and required for the export of mRNA out of the nucleus. SUB2 also plays a role in pre-mRNA splicing and spliceosome assembly. May be involved in rDNA and telomeric silencing, and maintenance of genome integrity. The polypeptide is ATP-dependent RNA helicase SUB2-1 (SUB2-1) (Vanderwaltozyma polyspora (strain ATCC 22028 / DSM 70294 / BCRC 21397 / CBS 2163 / NBRC 10782 / NRRL Y-8283 / UCD 57-17) (Kluyveromyces polysporus)).